Consider the following 338-residue polypeptide: Phenylalanine--tRNA ligase alpha subunit (338 aa).

Residue Glu252 participates in Mg(2+) binding.

The protein belongs to the class-II aminoacyl-tRNA synthetase family. Phe-tRNA synthetase alpha subunit type 1 subfamily. In terms of assembly, tetramer of two alpha and two beta subunits. Mg(2+) is required as a cofactor.

It is found in the cytoplasm. The catalysed reaction is tRNA(Phe) + L-phenylalanine + ATP = L-phenylalanyl-tRNA(Phe) + AMP + diphosphate + H(+). The protein is Phenylalanine--tRNA ligase alpha subunit of Pseudomonas syringae pv. syringae (strain B728a).